A 138-amino-acid chain; its full sequence is Phospholipase A2 crotoxin basic chain CBa2 (138 aa).

A signal peptide spans 1–16 (MRALWIVAVLLVGVEG). Cystine bridges form between Cys-42–Cys-131, Cys-44–Cys-60, Cys-59–Cys-111, Cys-65–Cys-138, Cys-66–Cys-104, Cys-73–Cys-97, and Cys-91–Cys-102. Residues Tyr-43, Gly-45, and Gly-47 each contribute to the Ca(2+) site. Residue His-63 is part of the active site. Asp-64 contacts Ca(2+). Asp-105 is an active-site residue.

The protein belongs to the phospholipase A2 family. Group II subfamily. D49 sub-subfamily. Heterodimer of one of the acidic (CA1, CA2, CA3 or CA4) and one of the basic (CBa1, CBa2, CBb, CBc or CBd) subunits; non-covalently linked. The acidic subunit is non-toxic, without enzymatic activity and comprises 3 peptides that are cross-linked by 5 disulfide bridges. The basic subunit is toxic, has phospholipase A2 activity and is composed of a single chain. Multiple variants of each subunit give different crotoxin complexes that can be subdivided into 2 classes: (1) those of high toxicity, low PLA2 activity (CBb, CBc and CBd linked with high affinity to any CA) and high stability (K(d)=4.5 nM) and (2) those of moderate toxicity, high PLA2 activity (CBa2 linked with low affinity to any CA) and low stability (K(d)=25 nM). Interacts with human NBD1 domain of CFTR. The cofactor is Ca(2+). Expressed by the venom gland.

Its subcellular location is the secreted. The catalysed reaction is a 1,2-diacyl-sn-glycero-3-phosphocholine + H2O = a 1-acyl-sn-glycero-3-phosphocholine + a fatty acid + H(+). Heterodimer CA-CB: Crotoxin is a potent presynaptic neurotoxin that possesses phospholipase A2 (PLA2) activity and exerts a lethal action by blocking neuromuscular transmission. It consists of a non-covalent association of a basic and weakly toxic PLA2 subunit (CBa2, CBb, CBc, or CBd), with a small acidic, non-enzymatic and non-toxic subunit (CA1, CA2, CA3 or CA4). The complex acts by binding to a specific 48-kDa protein (R48) receptor located on presynaptic membranes, forming a transient ternary complex CA-CB-R48, followed by dissociation of the CA-CB complex and release of the CA subunit. At equilibrium, only the CB subunits remain associated with the specific crotoxin receptor. In addition to neurotoxicity, crotoxin has been found to exert myotoxicity, nephrotoxicity, and cardiovascular toxicity. Moreover, anti-inflammatory, immunomodulatory, anti-tumor and analgesic effects of crotoxin have also been reported. Its function is as follows. Monomer CBa2: The basic subunit of crotoxin is a snake venom phospholipase A2 (PLA2) that exhibits weak neurotoxicity (10-fold less than the heterodimer) and strong anticoagulant effects by binding to factor Xa (F10) and inhibiting the prothrombinase activity (IC(50) is 41 nM). In addition, it shows the same effects described for the heterodimer and binds the nucleotide-binding domain (NBD1) of CFTR chloride channels and increases the channel current. PLA2 catalyzes the calcium-dependent hydrolysis of the 2-acyl groups in 3-sn-phosphoglycerides. The sequence is that of Phospholipase A2 crotoxin basic chain CBa2 from Crotalus durissus terrificus (South American rattlesnake).